The primary structure comprises 973 residues: Isoleucine--tRNA ligase, mitochondrial (973 aa).

Positions Pro87–His97 match the 'HIGH' region motif. The 'KMSKS' region signature appears at Lys625–Ser629. Position 628 (Lys628) interacts with ATP.

This sequence belongs to the class-I aminoacyl-tRNA synthetase family.

The protein resides in the cytoplasm. The protein localises to the mitochondrion matrix. The catalysed reaction is tRNA(Ile) + L-isoleucine + ATP = L-isoleucyl-tRNA(Ile) + AMP + diphosphate. In Schizosaccharomyces pombe (strain 972 / ATCC 24843) (Fission yeast), this protein is Isoleucine--tRNA ligase, mitochondrial (ism1).